The primary structure comprises 345 residues: Ribosomal RNA small subunit methyltransferase H (345 aa).

S-adenosyl-L-methionine is bound by residues G47–Y49, D65, F92, D113, and Q120. The interval E296–R345 is disordered.

This sequence belongs to the methyltransferase superfamily. RsmH family.

Its subcellular location is the cytoplasm. It carries out the reaction cytidine(1402) in 16S rRNA + S-adenosyl-L-methionine = N(4)-methylcytidine(1402) in 16S rRNA + S-adenosyl-L-homocysteine + H(+). Functionally, specifically methylates the N4 position of cytidine in position 1402 (C1402) of 16S rRNA. This is Ribosomal RNA small subunit methyltransferase H from Xanthobacter autotrophicus (strain ATCC BAA-1158 / Py2).